Consider the following 136-residue polypeptide: Large ribosomal subunit protein uL22 (136 aa).

Belongs to the universal ribosomal protein uL22 family. As to quaternary structure, part of the 50S ribosomal subunit.

Functionally, this protein binds specifically to 23S rRNA; its binding is stimulated by other ribosomal proteins, e.g. L4, L17, and L20. It is important during the early stages of 50S assembly. It makes multiple contacts with different domains of the 23S rRNA in the assembled 50S subunit and ribosome. The globular domain of the protein is located near the polypeptide exit tunnel on the outside of the subunit, while an extended beta-hairpin is found that lines the wall of the exit tunnel in the center of the 70S ribosome. The protein is Large ribosomal subunit protein uL22 of Bacteroides thetaiotaomicron (strain ATCC 29148 / DSM 2079 / JCM 5827 / CCUG 10774 / NCTC 10582 / VPI-5482 / E50).